The primary structure comprises 601 residues: CDPK-related kinase 5 (601 aa).

Positions 1-19 (MGLCTSKPNSSNSDQTPAR) are enriched in polar residues. Disordered regions lie at residues 1–55 (MGLC…KSPF) and 70–98 (KKTP…PPPS). G2 carries the N-myristoyl glycine lipid modification. The span at 26-35 (SESVKPSSSS) shows a compositional bias: low complexity. Residues 36 to 48 (VNGEDQCVTTTNN) are compositionally biased toward polar residues. The Protein kinase domain occupies 148–410 (YELGDEVGRG…AAQALSHPWI (263 aa)). Residues 154-162 (VGRGHFGYT) and K180 contribute to the ATP site. Residue D276 is the Proton acceptor of the active site. S316 carries the post-translational modification Phosphoserine. The tract at residues 415 to 445 (DAKVPMDILVFKLMRAYLRSSSLRKAALRAL) is autoinhibitory domain. Positions 434-454 (SSSLRKAALRALSKTLTVDEL) are calmodulin binding (CaMBD). 4 consecutive EF-hand domains span residues 452–488 (DELF…ATDA), 489–524 (MKDS…VHQL), 525–564 (EALD…GPSV), and 567–596 (HAVL…VSSR). Ca(2+) is bound by residues S467, N469, T471, N476, R508, E513, N546, E553, D578, and K580. The residue at position 582 (S582) is a Phosphoserine.

This sequence belongs to the protein kinase superfamily. Ser/Thr protein kinase family. CDPK subfamily. As to quaternary structure, binds calmodulin (CaM) in a calcium-dependent manner.

Its subcellular location is the membrane. It carries out the reaction L-seryl-[protein] + ATP = O-phospho-L-seryl-[protein] + ADP + H(+). The enzyme catalyses L-threonyl-[protein] + ATP = O-phospho-L-threonyl-[protein] + ADP + H(+). Its activity is regulated as follows. Activated by calcium and calmodulin. Autophosphorylation may play an important role in the regulation of the kinase activity. In terms of biological role, may play a role in signal transduction pathways that involve calcium as a second messenger. The sequence is that of CDPK-related kinase 5 (CRK5) from Arabidopsis thaliana (Mouse-ear cress).